The primary structure comprises 72 residues: UPF0154 protein YneF (72 aa).

The helical transmembrane segment at 4–24 threads the bilayer; that stretch reads WVGILVGVVALLIGVALGFFI.

It belongs to the UPF0154 family.

It localises to the membrane. The protein is UPF0154 protein YneF (yneF) of Bacillus subtilis (strain 168).